The chain runs to 587 residues: Ran GTPase-activating protein 1 (587 aa).

At A2 the chain carries N-acetylalanine. A Glycyl lysine isopeptide (Lys-Gly) (interchain with G-Cter in SUMO1); alternate cross-link involves residue K8. K8 participates in a covalent cross-link: Glycyl lysine isopeptide (Lys-Gly) (interchain with G-Cter in SUMO2); alternate. K15 is covalently cross-linked (Glycyl lysine isopeptide (Lys-Gly) (interchain with G-Cter in SUMO2)). Phosphoserine is present on S24. LRR repeat units follow at residues F48–K71, G111–A134, I207–Q230, and N235–E258. Residue K279 forms a Glycyl lysine isopeptide (Lys-Gly) (interchain with G-Cter in SUMO2) linkage. LRR repeat units follow at residues L292–D319 and K320–E343. S301 carries the post-translational modification Phosphoserine. The disordered stretch occupies residues L357–P430. At S358 the chain carries Phosphoserine. Positions S358–E397 are enriched in acidic residues. Over residues Q400 to P410 the composition is skewed to polar residues. T409 is modified (phosphothreonine; by CDK2). 2 positions are modified to phosphoserine: S428 and S435. T436 bears the Phosphothreonine mark. S442 is subject to Phosphoserine. A Glycyl lysine isopeptide (Lys-Gly) (interchain with G-Cter in SUMO2) cross-link involves residue K452. Positions L523–E526 match the SUMO conjugation motif. A Glycyl lysine isopeptide (Lys-Gly) (interchain with G-Cter in SUMO1); alternate cross-link involves residue K524. Residue K524 forms a Glycyl lysine isopeptide (Lys-Gly) (interchain with G-Cter in SUMO2); alternate linkage. An N6-acetyllysine; alternate modification is found at K524. K586 participates in a covalent cross-link: Glycyl lysine isopeptide (Lys-Gly) (interchain with G-Cter in SUMO2).

The protein belongs to the RNA1 family. Homodimer. Interacts with RAN. Forms a complex with RANBP2/NUP358, NXF1 and NXT1. Forms a tight complex in association with RANBP2/NUP358 and UBE2I/UBC9, the ubiquitin-conjugating enzyme E2. Interacts with UBE2I; the interaction conjugates SUMO1 to RANGAP1, and subsequently stabilizes interactions of sumoylated RANGAP1 with RANBP2/NUP358. The complex composed of RANBP2, SUMO1, RANGAP1 and UBE2I associates with nuclear pore complexes. Identified in a complex composed of RAN, RANBP2, sumoylated RANGAP1, UBE2I and XPO1. Identified in a complex composed of RAN, RANGAP1 and RANBP1. Interacts with TRAF6. Interacts with SUMO1 and SENP1. Interacts (when sumoylated) with MYCBP2; interaction inhibits MYCBP2 E3 ubiquitin-protein ligase activity and promotes MYCBP2 translocation to the nucleus. Phosphorylation occurs before nuclear envelope breakdown and continues throughout mitosis. Phosphorylated by the M-phase kinase cyclin B/Cdk1, in vitro. Differential timimg of dephosphorylation occurs during phases of mitosis. The phosphorylated form remains associated with RANBP2/NUP358 and the SUMO E2-conjugating enzyme, UBE2I, on nuclear pore complex (NPC) diassembly and during mitosis. In terms of processing, sumoylated. Sumoylation is necessary for targeting to the nuclear envelope (NE), and for association with mitotic spindles and kinetochores during mitosis. Also required for interaction with RANBP2 and is mediated by UBE2I. Desumoylated by HINT1. Highly expressed in brain, thymus and testis.

Its subcellular location is the cytoplasm. It localises to the nucleus. The protein localises to the nucleoplasm. The protein resides in the nucleus envelope. It is found in the chromosome. Its subcellular location is the centromere. It localises to the kinetochore. The protein localises to the cytoskeleton. The protein resides in the spindle. GTPase activator for RAN. Converts cytoplasmic GTP-bound RAN to GDP-bound RAN, which is essential for RAN-mediated nuclear import and export. Mediates dissociation of cargo from nuclear export complexes containing XPO1, RAN and RANBP2 after nuclear export. The polypeptide is Ran GTPase-activating protein 1 (RANGAP1) (Homo sapiens (Human)).